The chain runs to 442 residues: tRNA(Ile)-lysidine synthase (442 aa).

27-32 (SGGLDS) provides a ligand contact to ATP.

The protein belongs to the tRNA(Ile)-lysidine synthase family.

The protein resides in the cytoplasm. It catalyses the reaction cytidine(34) in tRNA(Ile2) + L-lysine + ATP = lysidine(34) in tRNA(Ile2) + AMP + diphosphate + H(+). Functionally, ligates lysine onto the cytidine present at position 34 of the AUA codon-specific tRNA(Ile) that contains the anticodon CAU, in an ATP-dependent manner. Cytidine is converted to lysidine, thus changing the amino acid specificity of the tRNA from methionine to isoleucine. This is tRNA(Ile)-lysidine synthase from Photorhabdus laumondii subsp. laumondii (strain DSM 15139 / CIP 105565 / TT01) (Photorhabdus luminescens subsp. laumondii).